The primary structure comprises 502 residues: Activin receptor type-1-like (502 aa).

Positions 1–22 (MTLGSFRRGLLMLSVAFGLTRG) are cleaved as a signal peptide. The Extracellular portion of the chain corresponds to 23-119 (DLAKPSKLVN…EEPEVDAHLP (97 aa)). Residue asparagine 32 is glycosylated (N-linked (GlcNAc...) asparagine). 3 disulfide bridges follow: cysteine 33-cysteine 50, cysteine 35-cysteine 40, and cysteine 45-cysteine 68. The segment at 72 to 75 (NQEL) is mediates specificity for BMP ligand. 2 cysteine pairs are disulfide-bonded: cysteine 76–cysteine 88 and cysteine 89–cysteine 94. Residue asparagine 97 is glycosylated (N-linked (GlcNAc...) asparagine). The chain crosses the membrane as a helical span at residues 120–140 (LILGPVLALPVLVALGALGLW). Over 141 to 502 (RVRRRQEKQR…HNPEKPKVIH (362 aa)) the chain is Cytoplasmic. Phosphoserine occurs at positions 154, 159, and 160. The region spanning 171 to 200 (SMLGDFLDSDCTTGSGSGLPFLVQRTVARQ) is the GS domain. The Protein kinase domain occupies 201–502 (VALVECVGKG…HNPEKPKVIH (302 aa)). Residues 207–215 (VGKGRYGEV) and lysine 228 each bind ATP. The active-site Proton acceptor is aspartate 329.

Belongs to the protein kinase superfamily. TKL Ser/Thr protein kinase family. TGFB receptor subfamily. Interacts with TSC22D1/TSC-22. The cofactor is Mg(2+). Requires Mn(2+) as cofactor.

It localises to the cell membrane. It carries out the reaction L-threonyl-[receptor-protein] + ATP = O-phospho-L-threonyl-[receptor-protein] + ADP + H(+). It catalyses the reaction L-seryl-[receptor-protein] + ATP = O-phospho-L-seryl-[receptor-protein] + ADP + H(+). Functionally, type I receptor for TGF-beta family ligands BMP9/GDF2 and BMP10 and important regulator of normal blood vessel development. On ligand binding, forms a receptor complex consisting of two type II and two type I transmembrane serine/threonine kinases. Type II receptors phosphorylate and activate type I receptors which autophosphorylate, then bind and activate SMAD transcriptional regulators. May bind activin as well. The sequence is that of Activin receptor type-1-like (Acvrl1) from Mus musculus (Mouse).